Consider the following 356-residue polypeptide: Phenylalanine--tRNA ligase alpha subunit (356 aa).

Glu-260 is a Mg(2+) binding site.

Belongs to the class-II aminoacyl-tRNA synthetase family. Phe-tRNA synthetase alpha subunit type 1 subfamily. In terms of assembly, tetramer of two alpha and two beta subunits. Mg(2+) serves as cofactor.

The protein resides in the cytoplasm. The enzyme catalyses tRNA(Phe) + L-phenylalanine + ATP = L-phenylalanyl-tRNA(Phe) + AMP + diphosphate + H(+). In Gluconobacter oxydans (strain 621H) (Gluconobacter suboxydans), this protein is Phenylalanine--tRNA ligase alpha subunit.